Consider the following 617-residue polypeptide: Elongation factor 4 (617 aa).

The tr-type G domain occupies 17 to 198 (AIIRNFCIIA…KIVRDLPAPV (182 aa)). GTP is bound by residues 29–34 (DHGKST) and 145–148 (NKID).

It belongs to the TRAFAC class translation factor GTPase superfamily. Classic translation factor GTPase family. LepA subfamily.

Its subcellular location is the cell membrane. The enzyme catalyses GTP + H2O = GDP + phosphate + H(+). Its function is as follows. Required for accurate and efficient protein synthesis under certain stress conditions. May act as a fidelity factor of the translation reaction, by catalyzing a one-codon backward translocation of tRNAs on improperly translocated ribosomes. Back-translocation proceeds from a post-translocation (POST) complex to a pre-translocation (PRE) complex, thus giving elongation factor G a second chance to translocate the tRNAs correctly. Binds to ribosomes in a GTP-dependent manner. This is Elongation factor 4 from Arthrobacter sp. (strain FB24).